The chain runs to 288 residues: Glycine--tRNA ligase alpha subunit (288 aa).

It belongs to the class-II aminoacyl-tRNA synthetase family. In terms of assembly, tetramer of two alpha and two beta subunits.

It is found in the cytoplasm. It carries out the reaction tRNA(Gly) + glycine + ATP = glycyl-tRNA(Gly) + AMP + diphosphate. The polypeptide is Glycine--tRNA ligase alpha subunit (Desulfatibacillum aliphaticivorans).